The following is a 361-amino-acid chain: tRNA/tmRNA (uracil-C(5))-methyltransferase (361 aa).

The S-adenosyl-L-methionine site is built by Q185, Y213, N218, E234, and D294. C319 acts as the Nucleophile in catalysis. E353 (proton acceptor) is an active-site residue.

This sequence belongs to the class I-like SAM-binding methyltransferase superfamily. RNA M5U methyltransferase family. TrmA subfamily.

It catalyses the reaction uridine(54) in tRNA + S-adenosyl-L-methionine = 5-methyluridine(54) in tRNA + S-adenosyl-L-homocysteine + H(+). It carries out the reaction uridine(341) in tmRNA + S-adenosyl-L-methionine = 5-methyluridine(341) in tmRNA + S-adenosyl-L-homocysteine + H(+). Its function is as follows. Dual-specificity methyltransferase that catalyzes the formation of 5-methyluridine at position 54 (m5U54) in all tRNAs, and that of position 341 (m5U341) in tmRNA (transfer-mRNA). In Pseudomonas putida (strain ATCC 47054 / DSM 6125 / CFBP 8728 / NCIMB 11950 / KT2440), this protein is tRNA/tmRNA (uracil-C(5))-methyltransferase.